The chain runs to 99 residues: MGNKQAKAPESKDSPRASLIPDATHLGPQFCKSCWFENKGLVECNNHYLCLNCLTLLLSVSNRCPICKMPLPTKLRPSAAPTAPPTGAADSIRPPPYSP.

Residue Gly-2 is the site of N-myristoyl glycine; by host attachment. An RING-type; atypical zinc finger spans residues 31-67; the sequence is CKSCWFENKGLVECNNHYLCLNCLTLLLSVSNRCPIC. Residues 74–99 are disordered; it reads KLRPSAAPTAPPTGAADSIRPPPYSP. Over residues 77-89 the composition is skewed to low complexity; that stretch reads PSAAPTAPPTGAA. Residues 81 to 84 carry the PTAP/PSAP motif motif; that stretch reads PTAP. The PPXY motif motif lies at 94-97; sequence PPPY.

This sequence belongs to the arenaviridae Z protein family. Interacts with protein NP; this interaction probably directs the encapsidated genome to budding sites. Interacts (via RING domain) with polymerase L; this interaction inhibits viral transcription and replication, Z partially blocks the product exit tunnel for the releasing nascent RNA product. Interacts with the glycoprotein complex; this interaction plays a role in virion budding. Interacts with host eIF4E; this interaction results in eIF4E reduced affinity for its substrate, the 5'-m7 G cap structure. Interacts (via late-budding domain) with host TSG101; this interaction is essential for budding and release of viral particles. Interacts with host RPLP0; this interaction may serve to load ribosome-like particles inside the virion. Interacts with host PML; this interaction induces PML bodies redistribution in the cytoplasm upon viral infection. Interacts with host TAX1BP1. Post-translationally, myristoylation is required for the role of RING finger protein Z in assembly and budding.

It localises to the virion. The protein resides in the host cytoplasm. Its subcellular location is the host perinuclear region. It is found in the host cell membrane. In terms of biological role, plays a crucial role in virion assembly and budding. Expressed late in the virus life cycle, it acts as an inhibitor of viral transcription and RNA synthesis by interacting with the viral polymerase L. Presumably recruits the NP encapsidated genome to cellular membranes at budding sites via direct interaction with NP. Plays critical roles in the final steps of viral release by interacting with host TSG101, a member of the vacuolar protein-sorting pathway and using other cellular host proteins involved in vesicle formation pathway. The budding of the virus progeny occurs after association of protein Z with the viral glycoprotein complex SSP-GP1-GP2 at the cell periphery, step that requires myristoylation of protein Z. Also selectively represses protein production by associating with host eIF4E. In cell-based minigenome assay, has an inhibitory effect on the ribonucleoprotein machinery (vRNP), which is responsible for the replication and transcription of the viral genome. This is RING finger protein Z from Homo sapiens (Human).